The primary structure comprises 210 residues: Secreted effector protein SteA (210 aa).

The protein localises to the secreted. Its subcellular location is the host cytoplasm. Its function is as follows. Effector proteins function to alter host cell physiology and promote bacterial survival in host tissues. Could be required for passage of bacteria from the peritoneal cavity into the spleen, for survival and replication within host cells, or for avoiding host immune response. This chain is Secreted effector protein SteA (steA), found in Salmonella typhimurium (strain 14028s / SGSC 2262).